Here is a 447-residue protein sequence, read N- to C-terminus: Putative bacteriocin-SkfA transport system permease protein SkfF (447 aa).

Residues 1-3 (MPF) are Cytoplasmic-facing. Residues 4–22 (LIMLLFVGAIGFQVSFVSR) form a helical membrane-spanning segment. The Extracellular segment spans residues 23–29 (STTWDMS). A helical transmembrane segment spans residues 30-50 (IAGWVLTGVFILYTAFGLFSN). The Cytoplasmic segment spans residues 51–59 (RLPSQMADI). A helical transmembrane segment spans residues 60 to 80 (IWLYGTATSFSKVVYSVLFFS). Residues 81–85 (VTWKA) lie on the Extracellular side of the membrane. The helical transmembrane segment at 86–104 (LLWIISAIFGDVLIVLLSG) threads the bilayer. At 105–113 (DHINLLGRS) the chain is on the cytoplasmic side. A helical transmembrane segment spans residues 114 to 134 (IIFVGLFFIAEVWLMSVSCAR). At 135–141 (TVKKMKR) the chain is on the extracellular side. The helical transmembrane segment at 142–160 (VYVLVFLLMLGIYSICLYR) threads the bilayer. The Cytoplasmic portion of the chain corresponds to 161–189 (FFFLQHSSGIWESIARFISGVGLVFDTLS). The chain crosses the membrane as a helical span at residues 190–208 (PLYVVVFIGIITVSFMTIA). Residues 209–247 (FTSRQVEMKESLVKEAEFWEEFQERQFGSGQIIQKPKTT) lie on the Extracellular side of the membrane. The helical transmembrane segment at 248–268 (WWGLQGLNGIWSFLWLELLLF) threads the bilayer. Over 269 to 297 (KKYLFFHSIHTVMLSGVFYVVIFMYPEWF) the chain is Cytoplasmic. Residues 298-318 (YLLFFLIVSAVMLSSYYSGIV) traverse the membrane as a helical segment. The Extracellular segment spans residues 319-341 (RHSQSGTLHLFPGALWKKIIILE). Residues 342–360 (LTNTVWLYILYCVSITFMA) form a helical membrane-spanning segment. Topologically, residues 361–363 (VGN) are cytoplasmic. A helical membrane pass occupies residues 364-382 (LVYWYIYGLGIYIWFMTIR). Topologically, residues 383 to 404 (LFAFTHTNRNDIKLSLPQYYKS) are extracellular. The helical transmembrane segment at 405–423 (FFMALGLSGICLYVIHLLT) threads the bilayer. The Cytoplasmic portion of the chain corresponds to 424–426 (ADW). Residues 427–447 (YTLVVVVCIGSLSWCLFYRFR) traverse the membrane as a helical segment.

The protein localises to the cell membrane. In terms of biological role, probably part of the ABC transporter SkfEF involved in the export of the bacteriocin SKF. Probably responsible for the translocation of bacteriocin SkfA across the membrane. This chain is Putative bacteriocin-SkfA transport system permease protein SkfF, found in Bacillus subtilis (strain 168).